Consider the following 818-residue polypeptide: ATM interactor (818 aa).

The span at 1-34 (MAATEAAAADSAGPAPGVPATPASTRGAAAASSP) shows a compositional bias: low complexity. The tract at residues 1-62 (MAATEAAAAD…RAAAPVPPAR (62 aa)) is disordered. The C2H2-type 1 zinc-finger motif lies at 80 to 105 (ILCTVRGCGKILPNSPALNMHLVKSH). Residues 161–181 (HKCSKCSNSYGTEWDLKRHEE) form a C2H2-type 2; degenerate zinc finger. Residues 210–221 (HEIPAEHRDPPS) are compositionally biased toward basic and acidic residues. Disordered stretches follow at residues 210–284 (HEIP…ATPP) and 603–625 (DNRS…GSAQ). Positions 219–437 (PPSKKRKMES…PDSSVSSCSQ (219 aa)) are required for formation of RAD51 foci. 2 stretches are compositionally biased toward polar residues: residues 229–243 (YLQN…TEPL) and 603–612 (DNRSLLSDTN).

As to quaternary structure, interacts via its C-terminus with ATM. Interacts with DYNLL; this interaction inhibits ATMIN transcriptional activity and hence may play a role in a feedback loop whereby DYNLL1 inhibits transactivation of its own promoter by ATMIN. ATMIN.

Its subcellular location is the nucleus. In terms of biological role, transcription factor. Plays a crucial role in cell survival and RAD51 foci formation in response to methylating DNA damage. Involved in regulating the activity of ATM in the absence of DNA damage. May play a role in stabilizing ATM. Binds to the DYNLL1 promoter and activates its transcription. The protein is ATM interactor of Mus musculus (Mouse).